The primary structure comprises 688 residues: Probable glucan endo-1,3-beta-glucosidase btgC (688 aa).

Disordered stretches follow at residues 1 to 91, 126 to 148, and 168 to 195; these read MSGP…NLGP, ANIP…PEPP, and GQLT…IPYQ. Residues 1 to 307 are Cytoplasmic-facing; it reads MSGPNRTYSF…PKPGGGNKKR (307 aa). Residues 175–188 show a composition bias toward polar residues; it reads SVSHLSSTNPSQRN. A helical; Signal-anchor for type II membrane protein transmembrane segment spans residues 308–328; sequence GWIVGAILAFIIIGAIVGGAV. The Extracellular segment spans residues 329 to 688; it reads GGTIGHRGNE…IPDCGGKTAT (360 aa). Positions 334-363 are disordered; the sequence is HRGNEEPSSASSASSSSTQTATEDTSVNGD. Positions 341-355 are enriched in low complexity; that stretch reads SSASSASSSSTQTAT. N-linked (GlcNAc...) asparagine glycosylation is found at asparagine 408, asparagine 431, and asparagine 459. The Proton donor role is filled by glutamate 491. Glutamate 590 (nucleophile) is an active-site residue. Residues asparagine 609 and asparagine 635 are each glycosylated (N-linked (GlcNAc...) asparagine).

It belongs to the glycosyl hydrolase 17 family.

It is found in the cell membrane. It carries out the reaction Hydrolysis of (1-&gt;3)-beta-D-glucosidic linkages in (1-&gt;3)-beta-D-glucans.. In terms of biological role, glucanases play a role in cell expansion during growth, in cell-cell fusion during mating, and in spore release during sporulation. This enzyme may be involved in beta-glucan degradation. Active on laminarin and lichenan. This is Probable glucan endo-1,3-beta-glucosidase btgC (btgC) from Aspergillus fumigatus (strain ATCC MYA-4609 / CBS 101355 / FGSC A1100 / Af293) (Neosartorya fumigata).